Here is a 313-residue protein sequence, read N- to C-terminus: Isoaspartyl peptidase (313 aa).

Catalysis depends on T179, which acts as the Nucleophile. Substrate is bound by residues 207 to 210 and 230 to 233; these read RVGD and TGTG.

The protein belongs to the Ntn-hydrolase family. In terms of assembly, heterotetramer of two alpha and two beta chains arranged as a dimer of alpha/beta heterodimers. In terms of processing, autocleaved. Generates the alpha and beta subunits. The beta subunit is thought to be responsible for the nucleophile hydrolase activity.

It catalyses the reaction Cleavage of a beta-linked Asp residue from the N-terminus of a polypeptide.. Functionally, degrades proteins damaged by L-isoaspartyl residue formation (also known as beta-Asp residues). Degrades L-isoaspartyl-containing di- and tripeptides. Acts best on iso-Asp-Leu, followed by iso-Asp-Ala, -His and to a lesser extent iso-Asp-Lys, -Phe and iso-Asp-Leu-Ala. Does not act on internal iso-Asp bonds (Als-iso-Asp-Leu-Ala). Does not act on alpha-Asp bonds. Has poor L-asparaginase activity. This chain is Isoaspartyl peptidase (iaaA), found in Salmonella typhimurium (strain LT2 / SGSC1412 / ATCC 700720).